The sequence spans 201 residues: 3-isopropylmalate dehydratase small subunit (201 aa).

Belongs to the LeuD family. LeuD type 1 subfamily. Heterodimer of LeuC and LeuD.

The enzyme catalyses (2R,3S)-3-isopropylmalate = (2S)-2-isopropylmalate. Its pathway is amino-acid biosynthesis; L-leucine biosynthesis; L-leucine from 3-methyl-2-oxobutanoate: step 2/4. Catalyzes the isomerization between 2-isopropylmalate and 3-isopropylmalate, via the formation of 2-isopropylmaleate. The protein is 3-isopropylmalate dehydratase small subunit of Azorhizobium caulinodans (strain ATCC 43989 / DSM 5975 / JCM 20966 / LMG 6465 / NBRC 14845 / NCIMB 13405 / ORS 571).